Here is a 467-residue protein sequence, read N- to C-terminus: Cysteine--tRNA ligase (467 aa).

Position 29 (Cys29) interacts with Zn(2+). The short motif at 31–41 is the 'HIGH' region element; it reads ATVQGEPHIGH. The Zn(2+) site is built by Cys207, His232, and Glu236. Positions 263–267 match the 'KMSKS' region motif; the sequence is KMSKS. Lys266 is an ATP binding site. A disordered region spans residues 446 to 467; the sequence is IDVTDTPNGPEWSLRTARGKAN.

This sequence belongs to the class-I aminoacyl-tRNA synthetase family. In terms of assembly, monomer. It depends on Zn(2+) as a cofactor.

The protein localises to the cytoplasm. It carries out the reaction tRNA(Cys) + L-cysteine + ATP = L-cysteinyl-tRNA(Cys) + AMP + diphosphate. This chain is Cysteine--tRNA ligase, found in Nocardia farcinica (strain IFM 10152).